The following is a 342-amino-acid chain: MEENFDIREQQLTTKERDFENALRPLNFEDFSGQDKVVDNLRIFVKAARLRAEALDHVLLHGPPGLGKTTLSNIIANELGVGFKVTSGPVLDKPGDLAGVLTSLEPNDVLFIDEIHRLSPVVEEYLYSAMEDYRIDIMIDKGPSARSIQLELSPFTLVGATTRSGLLTAPLRARFGINLHLEYYDDDVLTSIIRRSATILNVPCDVKAAGEIASRSRGTPRIANALLRRVRDFAQVKGSGRIDVEIARFALEALNIDRYGLDEIDNKILCTIIDKFKGGPVGLTTIATALGEDAGTIEEVYEPFLIKEGFLKRTPRGREVTELAYMHLGRSIYNSQKTLFDD.

The tract at residues 1–184 is large ATPase domain (RuvB-L); that stretch reads MEENFDIREQ…FGINLHLEYY (184 aa). Residues Leu23, Arg24, Gly65, Lys68, Thr69, Thr70, 131–133, Arg174, Tyr184, and Arg221 contribute to the ATP site; that span reads EDY. Thr69 contacts Mg(2+). A small ATPAse domain (RuvB-S) region spans residues 185–255; sequence DDDVLTSIIR…IARFALEALN (71 aa). Positions 258 to 342 are head domain (RuvB-H); the sequence is RYGLDEIDNK…YNSQKTLFDD (85 aa). Residues Arg313 and Arg318 each coordinate DNA.

Belongs to the RuvB family. As to quaternary structure, homohexamer. Forms an RuvA(8)-RuvB(12)-Holliday junction (HJ) complex. HJ DNA is sandwiched between 2 RuvA tetramers; dsDNA enters through RuvA and exits via RuvB. An RuvB hexamer assembles on each DNA strand where it exits the tetramer. Each RuvB hexamer is contacted by two RuvA subunits (via domain III) on 2 adjacent RuvB subunits; this complex drives branch migration. In the full resolvosome a probable DNA-RuvA(4)-RuvB(12)-RuvC(2) complex forms which resolves the HJ.

The protein localises to the cytoplasm. The catalysed reaction is ATP + H2O = ADP + phosphate + H(+). In terms of biological role, the RuvA-RuvB-RuvC complex processes Holliday junction (HJ) DNA during genetic recombination and DNA repair, while the RuvA-RuvB complex plays an important role in the rescue of blocked DNA replication forks via replication fork reversal (RFR). RuvA specifically binds to HJ cruciform DNA, conferring on it an open structure. The RuvB hexamer acts as an ATP-dependent pump, pulling dsDNA into and through the RuvAB complex. RuvB forms 2 homohexamers on either side of HJ DNA bound by 1 or 2 RuvA tetramers; 4 subunits per hexamer contact DNA at a time. Coordinated motions by a converter formed by DNA-disengaged RuvB subunits stimulates ATP hydrolysis and nucleotide exchange. Immobilization of the converter enables RuvB to convert the ATP-contained energy into a lever motion, pulling 2 nucleotides of DNA out of the RuvA tetramer per ATP hydrolyzed, thus driving DNA branch migration. The RuvB motors rotate together with the DNA substrate, which together with the progressing nucleotide cycle form the mechanistic basis for DNA recombination by continuous HJ branch migration. Branch migration allows RuvC to scan DNA until it finds its consensus sequence, where it cleaves and resolves cruciform DNA. This chain is Holliday junction branch migration complex subunit RuvB, found in Phocaeicola vulgatus (strain ATCC 8482 / DSM 1447 / JCM 5826 / CCUG 4940 / NBRC 14291 / NCTC 11154) (Bacteroides vulgatus).